The chain runs to 1033 residues: Calcium-transporting ATPase 12, plasma membrane-type (1033 aa).

The residue at position 1 (M1) is an N-acetylmethionine. Residues 1–152 (MRDLKEYDYS…NTYHKPPPKG (152 aa)) are Cytoplasmic-facing. The segment at 25–36 (QRRWRFAYAAIY) is interaction with calmodulin. Phosphoserine is present on S37. A helical membrane pass occupies residues 153–173 (LLFFVYEAFKDLTILILLVCA). Over 174 to 191 (IFSLGFGIKEHGIKEGWY) the chain is Lumenal. Residues 192 to 212 (EGGSIFVAVFLVIVVSALSNF) form a helical membrane-spanning segment. Residues 213 to 341 (RQERQFDKLS…SERTPLQVRL (129 aa)) are Cytoplasmic-facing. Residues 342-361 (DTLTSTIGKIGLTVAALVLV) form a helical membrane-spanning segment. Residues 362–397 (VLLVRYFTGNTEKEGKREYNGSKTPVDTVVNSVVRI) lie on the Lumenal side of the membrane. A helical membrane pass occupies residues 398-415 (VAAAVTIVVVAIPEGLPL). The Cytoplasmic segment spans residues 416 to 806 (AVTLTLAYSM…KWGRCVYNNI (391 aa)). The active-site 4-aspartylphosphate intermediate is the D453. D751 and D755 together coordinate Mg(2+). A helical membrane pass occupies residues 807–825 (QKFIQFQLTVNVAALVINF). Over 826–836 (IAAISAGEVPL) the chain is Lumenal. Residues 837–857 (TAVQLLWVNLIMDTLGALALA) traverse the membrane as a helical segment. Residues 858–877 (TERPTNELLKRKPVGRTEAL) lie on the Cytoplasmic side of the membrane. A helical membrane pass occupies residues 878–900 (ITNVMWRNLLVQSLYQIAVLLIL). Residues 901 to 909 (QFKGMSIFS) lie on the Lumenal side of the membrane. Residues 910–930 (VRKEVKDTLIFNTFVLCQVFN) form a helical membrane-spanning segment. Residues 931–948 (EFNAREMEKKNVFKGLHR) lie on the Cytoplasmic side of the membrane. Residues 949-970 (NRLFIGIIAITIVLQVIMVEFL) form a helical membrane-spanning segment. Residues 971–980 (KKFADTVRLN) lie on the Lumenal side of the membrane. Residues 981 to 1002 (GWQWGTCIALASLSWPIGFFTK) traverse the membrane as a helical segment. Residues 1003–1006 (FIPV) lie on the Cytoplasmic side of the membrane.

Belongs to the cation transport ATPase (P-type) (TC 3.A.3) family. Type IIB subfamily.

It is found in the membrane. The catalysed reaction is Ca(2+)(in) + ATP + H2O = Ca(2+)(out) + ADP + phosphate + H(+). With respect to regulation, activated by calmodulin. This magnesium-dependent enzyme catalyzes the hydrolysis of ATP coupled with the translocation of calcium from the cytosol out of the cell or into organelles. This chain is Calcium-transporting ATPase 12, plasma membrane-type (ACA12), found in Arabidopsis thaliana (Mouse-ear cress).